Reading from the N-terminus, the 562-residue chain is NAD-dependent malic enzyme (562 aa).

Tyrosine 101 serves as the catalytic Proton donor. Residue arginine 154 participates in NAD(+) binding. Catalysis depends on lysine 172, which acts as the Proton acceptor. A divalent metal cation-binding residues include glutamate 243, aspartate 244, and aspartate 267. NAD(+)-binding residues include aspartate 267 and asparagine 415.

This sequence belongs to the malic enzymes family. Homotetramer. Mg(2+) serves as cofactor. The cofactor is Mn(2+).

The catalysed reaction is (S)-malate + NAD(+) = pyruvate + CO2 + NADH. It catalyses the reaction oxaloacetate + H(+) = pyruvate + CO2. The protein is NAD-dependent malic enzyme of Aliivibrio fischeri (strain MJ11) (Vibrio fischeri).